The following is a 156-amino-acid chain: Small ribosomal subunit protein uS7 (156 aa).

This sequence belongs to the universal ribosomal protein uS7 family. As to quaternary structure, part of the 30S ribosomal subunit. Contacts proteins S9 and S11.

In terms of biological role, one of the primary rRNA binding proteins, it binds directly to 16S rRNA where it nucleates assembly of the head domain of the 30S subunit. Is located at the subunit interface close to the decoding center, probably blocks exit of the E-site tRNA. This chain is Small ribosomal subunit protein uS7, found in Synechococcus sp. (strain JA-3-3Ab) (Cyanobacteria bacterium Yellowstone A-Prime).